The chain runs to 566 residues: Acyl-CoA synthetase ALT10 (566 aa).

196 to 207 (MLFTSGTTGAPK) contacts AMP. Positions 473–551 (EVEHAALSHE…DAVHYNRTGK (79 aa)) are AMP-binding.

The protein belongs to the ATP-dependent AMP-binding enzyme family.

It participates in mycotoxin biosynthesis. In terms of biological role, acyl-CoA synthetase; part of the gene cluster that mediates the biosynthesis of the host-selective toxins (HSTs) AAL-toxins, sphinganine-analog mycotoxins responsible for Alternaria stem canker on tomato by the tomato pathotype. The biosynthesis starts with the polyketide synthase ALT1-catalyzed C-16 carbon chain assembly from one starter acetyl-CoA unit with malonyl-CoA extender units. ALT1 also selectively transfers methyl groups at the first and the third cycle of chain elongation for AAL toxin. The C-16 polyketide chain is released from the enzyme by a nucleophilic attack of a carbanion, which is derived from R-carbon of glycin by decarboxylation, on the carbonyl carbon of polyketide acyl chain. This step is probably catalyzed by a pyridoxal 5'-phosphate-dependent aminoacyl transferase ALT4. The respective functions of the other enzymes encoded by the cluster have still to be elucidated. The sphingosine N-acyltransferase-like protein ALT7 seems not to act as a resistance/self-tolerance factor against the toxin in the toxin biosynthetic gene cluster, contrary to what is expected. In Alternaria alternata (Alternaria rot fungus), this protein is Acyl-CoA synthetase ALT10.